The following is a 418-amino-acid chain: Pentatricopeptide repeat-containing protein At2g18520, mitochondrial (418 aa).

Residues 1–14 (MTSSRLYLRFLRRF) constitute a mitochondrion transit peptide. PPR repeat units lie at residues 101–135 (TETFLSTLIRSYGRASMFDHAMKMFEEMDKLGTPR), 136–166 (TVVSFNALLAACLHSDLFERVPQLFDEFPQR), 173–207 (DKISYGMLIKSYCDSGKPEKAMEIMRDMEVKGVEV), 208–242 (TIIAFTTILGSLYKNGLVDEAESLWIEMVNKGCDL), 243–276 (DNTVYNVRLMNAAKESPERVKELMEEMSSVGLKP), 277–311 (DTVSYNYLMTAYCVKGMMSEAKKVYEGLEQPNAAT), 312–342 (FRTLIFHLCINGLYDQGLTVFKKSAIVHKIP), and 343–373 (DFKTCKHLTEGLVKNNRMEDARGVARIVKKK).

It belongs to the PPR family. P subfamily.

It localises to the mitochondrion. This is Pentatricopeptide repeat-containing protein At2g18520, mitochondrial from Arabidopsis thaliana (Mouse-ear cress).